We begin with the raw amino-acid sequence, 2370 residues long: Genome polyprotein (2370 aa).

G112 carries N-myristoyl glycine; by host lipidation. Disordered regions lie at residues 140-173 (VGDM…GNVV) and 704-736 (GADG…FDYP). Over residues 154–171 (GSNKGGSSTSPKSTSNGN) the composition is skewed to low complexity. Residues 713-725 (APTSDLSDGNPTT) show a composition bias toward polar residues. The SF3 helicase domain occupies 1358–1522 (YSTALSAISL…AAFSAAAALK (165 aa)). Residue 1384–1391 (GPPGTGKS) participates in ATP binding. G1597 carries N-myristoyl glycine; by host lipidation. Residues 1646 to 1666 (IFAASSFLSLIAATLTIVRCL) traverse the membrane as a helical segment. The disordered stretch occupies residues 1674 to 1696 (GAYSGTPVPKPRKKDLPKQPVYS). At Y1676 the chain carries O-(5'-phospho-RNA)-tyrosine. The region spanning 1697–1886 (GPVRRQGFDP…FSARLTPERV (190 aa)) is the Peptidase C3 domain. Active-site for protease 3C activity residues include H1745, E1776, and C1849. Polar residues predominate over residues 2007-2016 (SPGYPWTTQG). The tract at residues 2007–2026 (SPGYPWTTQGRSRRSLFDED) is disordered. Residues 2122 to 2239 (SNVWSIDYSC…GSNQDFHPRE (118 aa)) form the RdRp catalytic domain. Residues D2128 and D2225 each act as for RdRp activity in the active site.

In terms of assembly, interacts with capsid protein VP1. Interacts with capsid protein VP3. Interacts with capsid protein VP0. Interacts with capsid protein VP3. As to quaternary structure, interacts with capsid protein VP0. Interacts with capsid protein VP1. In terms of assembly, homodimer. Interacts with protein 2B. Interacts with protein 2C. Homodimer. Interacts with host ABCD3. Interacts with protein 2A. Interacts with host ACBD3. As to quaternary structure, homodimer. Interacts with host ABCD3. Interacts with protein 2A. Interacts with protein 3A. Interacts with protein 3C. Interacts with host ACBD3. In terms of assembly, homodimer. Interacts with host ABCD3 (via GOLD domain) and PI4KB; these interactions allow the formation of a viral protein/ACBD3/PI4KB complex in order to synthesize PI4P at the viral RNA replication sites. Interacts with protein 2C. Interacts with protein 3C. Protein 3C: Interacts with protein 2A. Protein 3C: Interacts with protein 2C. In terms of processing, specific enzymatic cleavages by the viral protease in vivo yield a variety of precursors and mature proteins. The leader protein-VP0 junction is cleaved by 3C proteinase. The VP1/2A junction is cleaved by the protein 3CD in association with protein 2A. Post-translationally, uridylylated by the polymerase and is covalently linked to the 5'-end of genomic RNA. This uridylylated form acts as a nucleotide-peptide primer for the polymerase.

It localises to the virion. Its subcellular location is the host cytoplasm. It is found in the host cytoplasmic vesicle membrane. The protein resides in the host Golgi apparatus membrane. The enzyme catalyses RNA(n) + a ribonucleoside 5'-triphosphate = RNA(n+1) + diphosphate. It catalyses the reaction Selective cleavage of Gln-|-Gly bond in the poliovirus polyprotein. In other picornavirus reactions Glu may be substituted for Gln, and Ser or Thr for Gly.. The catalysed reaction is ATP + H2O = ADP + phosphate + H(+). In terms of biological role, required for viral RNA replication and viral RNA encapsidation. Does not have any proteolytic activity. Its function is as follows. Forms an icosahedral capsid of pseudo T=3 symmetry with capsid proteins VP0 and VP3. Together they form an icosahedral capsid composed of 60 copies of each VP0, VP1, and VP3. All the three latter proteins contain a beta-sheet structure called beta-barrel jelly roll. Functionally, forms an icosahedral capsid of pseudo T=3 symmetry with capsid proteins VP1 and VP3. Together they form an icosahedral capsid composed of 60 copies of each VP0, VP1, and VP3. All the three latter proteins contain a beta-sheet structure called beta-barrel jelly roll. Forms an icosahedral capsid of pseudo T=3 symmetry with capsid proteins VP0 and VP1. Together they form an icosahedral capsid composed of 60 copies of each VP0, VP1, and VP3. All the three latter proteins contain a beta-sheet structure called beta-barrel jelly roll. In terms of biological role, required for viral RNA replication. Does not have any proteolytic activity. Its function is as follows. Affects membrane integrity and causes an increase in membrane permeability. Functionally, induces and associates with structural rearrangements of intracellular membranes. Displays RNA-binding, nucleotide binding and NTPase activities. May play a role in virion morphogenesis and viral RNA encapsidation by interacting with the capsid protein VP3. Serves as membrane anchor via its hydrophobic domain. Plays an essential role in viral RNA replication by recruiting PI4KB at the viral replication sites, thereby allowing the formation of rearranged membranous structures where viral replication takes place. In terms of biological role, forms a primer, VPg-pU, which is utilized by the polymerase for the initiation of RNA chains. Its function is as follows. Cysteine protease that generates mature viral proteins from the precursor polyprotein. In addition to its proteolytic activity, it binds to viral RNA, and thus influences viral genome replication. RNA and substrate cooperatively bind to the protease. Functionally, replicates the genomic and antigenomic RNAs by recognizing replications specific signals. Performs VPg uridylylation. This Homo sapiens (Human) protein is Genome polyprotein.